The sequence spans 391 residues: Methionine import ATP-binding protein MetN 2 (391 aa).

One can recognise an ABC transporter domain in the interval 44–280 (VHVGKVFATP…PRHGATRALL (237 aa)). 77–84 (GRSGAGKS) serves as a coordination point for ATP.

The protein belongs to the ABC transporter superfamily. Methionine importer (TC 3.A.1.24) family. As to quaternary structure, the complex is composed of two ATP-binding proteins (MetN), two transmembrane proteins (MetI) and a solute-binding protein (MetQ).

It localises to the cell inner membrane. It carries out the reaction L-methionine(out) + ATP + H2O = L-methionine(in) + ADP + phosphate + H(+). The enzyme catalyses D-methionine(out) + ATP + H2O = D-methionine(in) + ADP + phosphate + H(+). In terms of biological role, part of the ABC transporter complex MetNIQ involved in methionine import. Responsible for energy coupling to the transport system. In Burkholderia ambifaria (strain ATCC BAA-244 / DSM 16087 / CCUG 44356 / LMG 19182 / AMMD) (Burkholderia cepacia (strain AMMD)), this protein is Methionine import ATP-binding protein MetN 2.